The chain runs to 794 residues: Phosphoribosylformylglycinamidine synthase subunit PurL (794 aa).

His47 is a catalytic residue. 2 residues coordinate ATP: Tyr50 and Lys89. Glu91 lines the Mg(2+) pocket. Residues 92–95 and Arg114 each bind substrate; that span reads SHNH. The active-site Proton acceptor is His93. Asp115 contacts Mg(2+). A substrate-binding site is contributed by Gln238. A Mg(2+)-binding site is contributed by Asp266. 310 to 312 provides a ligand contact to substrate; it reads ESQ. Residues Asp522 and Gly559 each coordinate ATP. Asn560 serves as a coordination point for Mg(2+). Ser562 provides a ligand contact to substrate.

The protein belongs to the FGAMS family. As to quaternary structure, monomer. Part of the FGAM synthase complex composed of 1 PurL, 1 PurQ and 2 PurS subunits.

Its subcellular location is the cytoplasm. It carries out the reaction N(2)-formyl-N(1)-(5-phospho-beta-D-ribosyl)glycinamide + L-glutamine + ATP + H2O = 2-formamido-N(1)-(5-O-phospho-beta-D-ribosyl)acetamidine + L-glutamate + ADP + phosphate + H(+). It functions in the pathway purine metabolism; IMP biosynthesis via de novo pathway; 5-amino-1-(5-phospho-D-ribosyl)imidazole from N(2)-formyl-N(1)-(5-phospho-D-ribosyl)glycinamide: step 1/2. In terms of biological role, part of the phosphoribosylformylglycinamidine synthase complex involved in the purines biosynthetic pathway. Catalyzes the ATP-dependent conversion of formylglycinamide ribonucleotide (FGAR) and glutamine to yield formylglycinamidine ribonucleotide (FGAM) and glutamate. The FGAM synthase complex is composed of three subunits. PurQ produces an ammonia molecule by converting glutamine to glutamate. PurL transfers the ammonia molecule to FGAR to form FGAM in an ATP-dependent manner. PurS interacts with PurQ and PurL and is thought to assist in the transfer of the ammonia molecule from PurQ to PurL. The chain is Phosphoribosylformylglycinamidine synthase subunit PurL from Prochlorococcus marinus (strain MIT 9303).